The primary structure comprises 441 residues: Ribosomal protein uS12 methylthiotransferase RimO (441 aa).

The MTTase N-terminal domain maps to 6-116; sequence PKVGFVSLGC…VMTAVHANLP (111 aa). [4Fe-4S] cluster-binding residues include cysteine 15, cysteine 51, cysteine 80, cysteine 147, cysteine 151, and cysteine 154. A Radical SAM core domain is found at 133–370; it reads LTPQHYAYLK…MEVQESISAE (238 aa). The 67-residue stretch at 373–439 folds into the TRAM domain; it reads RRKIGRIETV…GHDLWAAPPA (67 aa).

This sequence belongs to the methylthiotransferase family. RimO subfamily. The cofactor is [4Fe-4S] cluster.

The protein resides in the cytoplasm. It carries out the reaction L-aspartate(89)-[ribosomal protein uS12]-hydrogen + (sulfur carrier)-SH + AH2 + 2 S-adenosyl-L-methionine = 3-methylsulfanyl-L-aspartate(89)-[ribosomal protein uS12]-hydrogen + (sulfur carrier)-H + 5'-deoxyadenosine + L-methionine + A + S-adenosyl-L-homocysteine + 2 H(+). Functionally, catalyzes the methylthiolation of an aspartic acid residue of ribosomal protein uS12. The chain is Ribosomal protein uS12 methylthiotransferase RimO from Methylobacillus flagellatus (strain ATCC 51484 / DSM 6875 / VKM B-1610 / KT).